A 167-amino-acid polypeptide reads, in one-letter code: Type IV major pilin protein PilE (167 aa).

Positions 1–7 (MNTLQKG) are cleaved as a propeptide — leader sequence. An N-methylphenylalanine modification is found at F8. A helical membrane pass occupies residues 8–28 (FTLIELMIVIAIVGILAAVAL). An O-linked (GlcNAc...) serine glycan is attached at S70. The cysteines at positions 127 and 160 are disulfide-linked.

Belongs to the N-Me-Phe pilin family. As to quaternary structure, the pili are polar flexible filaments of about 5.4 nanometers diameter and 2.5 micrometers average length; they consist of only a single polypeptide chain arranged in a helical configuration of five subunits per turn in the assembled pilus.

Its subcellular location is the fimbrium. It localises to the membrane. Functionally, major component of the type IV pilus (T4P) that plays a role in cellular adherence, microcolony formation, resistance to neutrophil mediated killing, twitching motility as well as transformation. Mediates the attachment and the formation of bacterial microcolonies on host epithelial cells. Mechanistically, pili retractation induces host NF-kappa-B activation in infected cells, which is temporally associated with the formation of gonococcal microcolonies. In Neisseria gonorrhoeae, this protein is Type IV major pilin protein PilE (pilE).